We begin with the raw amino-acid sequence, 353 residues long: 2-oxoglutarate-Fe(II) type oxidoreductase ppzD (353 aa).

Residues 181–292 (NTSELRLNHY…RYSVAYFGKP (112 aa)) enclose the Fe2OG dioxygenase domain. 3 residues coordinate Fe cation: H208, D210, and H268. Residue R283 coordinates 2-oxoglutarate.

The protein belongs to the iron/ascorbate-dependent oxidoreductase family. Fe(2+) serves as cofactor.

The enzyme catalyses L-proline + 2-oxoglutarate + O2 = trans-4-hydroxy-L-proline + succinate + CO2. It catalyses the reaction L-proline + 2-oxoglutarate + O2 = trans-3-hydroxy-L-proline + succinate + CO2. It carries out the reaction D-proline + 2-oxoglutarate + O2 = cis-4-hydroxy-D-proline + succinate + CO2. The protein operates within secondary metabolite biosynthesis. Functionally, 2-oxoglutarate-Fe(II) type oxidoreductase; part of the gene cluster that mediates the biosynthesis of pyrrolopyrazines, secondary metabolites showing insecticidal activity. Within the pathway, ppzD converts L-proline into trans-4-hydroxy-L-proline as a major product, yielding a key precursor for peramine biosynthesis. PpzD is also able to convert L-proline into trans-3-hydroxy-L-proline. The single multifunctional NRPS ppzA is sufficient to produce peramine via condensation of 1-pyrroline-5-carboxylate and arginine, N-methylation of the alpha-amino group of arginine and reduction of the thioester and the cyclization to form an iminium ion resulting in release from the peptide synthetase. Deprotonation of this intermediate and oxidation of the pyrroline ring would give rise to peramine. In Epichloe species that produce only peramine, the peramine synthetase gene is not localized in a gene cluster, in contrast to Metarhizium species that contain additional pyrrolopyrazine biosynthesis genes. The 2-oxoglutarate-Fe(II) type oxidoreductase ppzC hydroxylates peramine to yield the newly identified compound 8-hydroxyperamine whereas ppzD converts L-proline into trans-4-hydroxy-L-proline, a precursor of peramine biosynthesis. The chain is 2-oxoglutarate-Fe(II) type oxidoreductase ppzD from Metarhizium rileyi (strain RCEF 4871) (Nomuraea rileyi).